Here is a 2946-residue protein sequence, read N- to C-terminus: Neurobeachin (2946 aa).

Residues 971–995 (ENIKKGKKGNVSTISGLSSQTTGAK) are disordered. Over residues 980–993 (NVSTISGLSSQTTG) the composition is skewed to polar residues. S1011 and S1014 each carry phosphoserine. Residues 1326–1368 (TTMFRIPEFKWSPMHQRLLTDLLFALETDVHVWRSHSTKSVMD) form a WD 1 repeat. Disordered regions lie at residues 1490-1531 (QRDR…LSPI), 1651-1675 (TIKE…HTDS), 1711-1731 (VKKS…PATS), and 1841-1860 (GAVD…VNGA). The segment covering 1497 to 1517 (SSHGSSKPQEVPQSVTATAAS) has biased composition (polar residues). S1529 bears the Phosphoserine mark. Phosphoserine occurs at positions 1714 and 1717. Polar residues predominate over residues 1716–1731 (ESLTENPSETLKPATS). Over residues 1845 to 1855 (SGSSSSSSSSS) the composition is skewed to low complexity. Position 2138 is a phosphoserine (S2138). Residues 2147–2255 (NLAGPVVLST…TVKKVVYSLP (109 aa)) enclose the BEACH-type PH domain. Residues 2274–2563 (ATPRQLYKSS…QLLIEPHPPR (290 aa)) enclose the BEACH domain. A Phosphoserine modification is found at S2575. WD repeat units lie at residues 2718 to 2761 (GHWD…HIIG), 2778 to 2818 (GHDH…RALE), 2860 to 2899 (EIND…QLYI), and 2902 to 2941 (GCDA…WHYE).

Belongs to the WD repeat neurobeachin family. As to quaternary structure, interacts with RII subunit of PKA. Predominant in many brain structures. Also expressed at medium levels in spleen, thymus, prostate, testis and ovary. Low level expression is seen in heart, kidney, pancreas, skeletal muscle and intestine.

It localises to the cytoplasm. Its subcellular location is the membrane. Binds to type II regulatory subunits of protein kinase A and anchors/targets them to the membrane. May anchor the kinase to cytoskeletal and/or organelle-associated proteins. This chain is Neurobeachin, found in Homo sapiens (Human).